Reading from the N-terminus, the 130-residue chain is Glycine cleavage system H protein (130 aa).

Residues 22 to 103 (KAYIGISDCA…PYGSWIAAIE (82 aa)) enclose the Lipoyl-binding domain. Lys63 is modified (N6-lipoyllysine).

It belongs to the GcvH family. The glycine cleavage system is composed of four proteins: P, T, L and H. (R)-lipoate serves as cofactor.

In terms of biological role, the glycine cleavage system catalyzes the degradation of glycine. The H protein shuttles the methylamine group of glycine from the P protein to the T protein. This Clostridium botulinum (strain ATCC 19397 / Type A) protein is Glycine cleavage system H protein.